A 291-amino-acid polypeptide reads, in one-letter code: Protease HtpX (291 aa).

Transmembrane regions (helical) follow at residues 4-24 (IALFLATNLAVMIVFSIVLNI) and 36-56 (LSGLLVMAVLFGFGGSLVSLL). Residue His143 coordinates Zn(2+). Glu144 is a catalytic residue. His147 contacts Zn(2+). Helical transmembrane passes span 151–171 (GDMITMTLMQGVVNTFVIFLS) and 199–219 (FIVSTVLEIAFGFLASFLTMW). Glu225 provides a ligand contact to Zn(2+).

It belongs to the peptidase M48B family. Zn(2+) is required as a cofactor.

It localises to the cell inner membrane. This Aliivibrio salmonicida (strain LFI1238) (Vibrio salmonicida (strain LFI1238)) protein is Protease HtpX.